We begin with the raw amino-acid sequence, 121 residues long: Small ribosomal subunit protein uS13 (121 aa).

Residues 97-121 are disordered; it reads VRGQRTRTNARTRRGARKTVAGRKK. The segment covering 100–121 has biased composition (basic residues); that stretch reads QRTRTNARTRRGARKTVAGRKK.

It belongs to the universal ribosomal protein uS13 family. In terms of assembly, part of the 30S ribosomal subunit. Forms a loose heterodimer with protein S19. Forms two bridges to the 50S subunit in the 70S ribosome.

Functionally, located at the top of the head of the 30S subunit, it contacts several helices of the 16S rRNA. In the 70S ribosome it contacts the 23S rRNA (bridge B1a) and protein L5 of the 50S subunit (bridge B1b), connecting the 2 subunits; these bridges are implicated in subunit movement. Contacts the tRNAs in the A and P-sites. The protein is Small ribosomal subunit protein uS13 of Prochlorococcus marinus (strain NATL1A).